A 406-amino-acid chain; its full sequence is Type II secretion system protein F (406 aa).

At Met1–Met171 the chain is on the cytoplasmic side. Ca(2+)-binding residues include Glu97, Glu151, and Asp155. Residues Ile172–Val192 form a helical membrane-spanning segment. The Periplasmic segment spans residues Val193–His223. A helical membrane pass occupies residues Trp224–Thr244. Residues Lys245–Asn368 lie on the Cytoplasmic side of the membrane. The helical transmembrane segment at Ile369–Ile389 threads the bilayer. The Periplasmic portion of the chain corresponds to Val390–Arg406.

It belongs to the GSP F family. Type II secretion system is composed of four main components: the outer membrane complex, the inner membrane complex, the cytoplasmic secretion ATPase and the periplasm-spanning pseudopilus. Homodimer. Interacts with EpsE/GspE and EpsL/GspL components.

The protein localises to the cell inner membrane. Its function is as follows. Component of the type II secretion system inner membrane complex required for the energy-dependent secretion of extracellular factors such as proteases and toxins from the periplasm. The protein is Type II secretion system protein F (epsF) of Vibrio cholerae serotype O1 (strain ATCC 39315 / El Tor Inaba N16961).